The primary structure comprises 109 residues: Large ribosomal subunit protein uL22 (109 aa).

It belongs to the universal ribosomal protein uL22 family. Part of the 50S ribosomal subunit.

This protein binds specifically to 23S rRNA; its binding is stimulated by other ribosomal proteins, e.g. L4, L17, and L20. It is important during the early stages of 50S assembly. It makes multiple contacts with different domains of the 23S rRNA in the assembled 50S subunit and ribosome. Its function is as follows. The globular domain of the protein is located near the polypeptide exit tunnel on the outside of the subunit, while an extended beta-hairpin is found that lines the wall of the exit tunnel in the center of the 70S ribosome. The polypeptide is Large ribosomal subunit protein uL22 (Herminiimonas arsenicoxydans).